Consider the following 363-residue polypeptide: Aminomethyltransferase (363 aa).

Belongs to the GcvT family. As to quaternary structure, the glycine cleavage system is composed of four proteins: P, T, L and H.

It carries out the reaction N(6)-[(R)-S(8)-aminomethyldihydrolipoyl]-L-lysyl-[protein] + (6S)-5,6,7,8-tetrahydrofolate = N(6)-[(R)-dihydrolipoyl]-L-lysyl-[protein] + (6R)-5,10-methylene-5,6,7,8-tetrahydrofolate + NH4(+). Its function is as follows. The glycine cleavage system catalyzes the degradation of glycine. This Staphylococcus aureus (strain bovine RF122 / ET3-1) protein is Aminomethyltransferase.